A 387-amino-acid polypeptide reads, in one-letter code: Tetratricopeptide repeat protein 4 (387 aa).

M1 carries the post-translational modification N-acetylmethionine. Phosphoserine is present on residues S47 and S51. 3 TPR repeats span residues 79-112, 117-150, and 151-184; these read AKTY…KCAD, AVLY…KPCH, and LKAI…DAKE. S243 is modified (phosphoserine).

Belongs to the TTC4 family. As to quaternary structure, interacts (via TPR repeats) with HSP90AB1. Interacts with HSPA8 and CDC6. Interacts with TBK1. Interacts with MSL1. As to expression, highly expressed in proliferating tissue and tumor cell lines but not in normal cell lines.

The protein localises to the nucleus. Its subcellular location is the nucleoplasm. The protein resides in the cytoplasm. Functionally, may act as a co-chaperone for HSP90AB1. Promotes Sendai virus (SeV)-induced host cell innate immune responses. The polypeptide is Tetratricopeptide repeat protein 4 (TTC4) (Homo sapiens (Human)).